A 483-amino-acid chain; its full sequence is Glutarate-semialdehyde dehydrogenase (483 aa).

NADP(+) is bound by residues 156–157 (WN), 180–183 (KPAS), and 233–234 (GS). Glu255 acts as the Proton acceptor in catalysis. Leu256 contributes to the NADP(+) binding site. Cys289 serves as the catalytic Nucleophile. Position 386 (Glu386) interacts with NADP(+).

It belongs to the aldehyde dehydrogenase family.

The catalysed reaction is 5-oxopentanoate + NADP(+) + H2O = glutarate + NADPH + 2 H(+). The protein operates within amino-acid degradation. In terms of biological role, catalyzes the conversion of 5-oxopentanoate (glutarate semialdehyde) to glutarate. Involved in L-lysine degradation. This is Glutarate-semialdehyde dehydrogenase from Pseudomonas aeruginosa (strain ATCC 15692 / DSM 22644 / CIP 104116 / JCM 14847 / LMG 12228 / 1C / PRS 101 / PAO1).